Here is a 3977-residue protein sequence, read N- to C-terminus: Hybrid PKS-NRPS synthetase gkaA (3977 aa).

A Ketosynthase family 3 (KS3) domain is found at 4–441; the sequence is EEPIAVIGSG…GTNAHVILEN (438 aa). Catalysis depends on for beta-ketoacyl synthase activity residues cysteine 177, histidine 316, and histidine 361. A Malonyl-CoA:ACP transacylase (MAT) domain is found at 551–867; sequence VFTGQGAQWP…TGVIHRGKND (317 aa). The interval 937 to 1072 is N-terminal hotdog fold; that stretch reads NPLLGTRTTD…GRITVTLGES (136 aa). The PKS/mFAS DH domain occupies 937-1241; sequence NPLLGTRTTD…VVAFSEATAD (305 aa). The active-site Proton acceptor; for dehydratase activity is histidine 969. The interval 1087-1241 is C-terminal hotdog fold; sequence LVSIPQDRFY…VVAFSEATAD (155 aa). Aspartate 1147 functions as the Proton donor; for dehydratase activity in the catalytic mechanism. A methyltransferase (cMeT) domain region spans residues 1286-1580; the sequence is YMKKTVEEFP…FSGIDSSTPE (295 aa). A Ketoreductase (KR) domain is found at 2128 to 2301; the sequence is TYVLFGLTSD…AASILHIGAV (174 aa). In terms of domain architecture, Carrier 1 spans 2409–2490; that stretch reads SEVFEIISGA…QLLEYAIDNM (82 aa). Residue serine 2450 is modified to O-(pantetheine 4'-phosphoryl)serine. Positions 2497-2542 are disordered; the sequence is HSNGEQGTVSDSGSTNIQLTPASTPSVPSVNLASDSTGSSQVGEDV. Positions 2499–2538 are enriched in polar residues; sequence NGEQGTVSDSGSTNIQLTPASTPSVPSVNLASDSTGSSQV. The tract at residues 2584-3018 is condensation; it reads EKIIPMSPGQ…LKDISLFSKE (435 aa). The interval 3048 to 3437 is adenylation; the sequence is IAEHPDTISI…GALEILGRID (390 aa). In terms of domain architecture, Carrier 2 spans 3552–3632; sequence FSLTPTEDKL…AMASLITPAS (81 aa). O-(pantetheine 4'-phosphoryl)serine is present on serine 3592. In terms of domain architecture, Thioester reductase (TE) spans 3672 to 3890; it reads LTGATGFLGH…FVDLVSVQNV (219 aa).

In the C-terminal section; belongs to the NRP synthetase family. Pantetheine 4'-phosphate serves as cofactor.

It participates in mycotoxin biosynthesis. Its function is as follows. Hybrid PKS-NRPS synthetase; part of the gene cluster that mediates the biosynthesis of GKK1032, fungal natural products containing a macrocyclic para-cyclophane connected to a decahydrofluorene ring system that show potent antitumor activities. Within the pathway, the PKS-NRPS gkaA, with the help of the trans-enoyl reductase gkaC, synthesize the polyketide-tyrosyl acyl thioester product which can be reductively off-loaded by the terminal reductase (R) domain in gkaA. The PKS module of gkaA acts in combination with the trans-acting enoyl reductase gkaC to produce a methylated polyketide attached to the ACP domain. In parallel, the adenylation (A) domain of the NRPS module activated L-tyrosine, which is then transferred to the ACP domain. The condensation (C) domain subsequently links this group to the polyketide chain, forming an enzyme-bound amide. The alpha/beta hydrolase gkaG is then required to catalyze the subsequent Knoevenagel condensation that affords the 3-pyrrolin-2-one ring, whereas the three proteins gkaB, gkadX and gkaZ then function synergistically to form the cyclophane. The chain is Hybrid PKS-NRPS synthetase gkaA from Penicillium citrinum.